The following is a 194-amino-acid chain: Holliday junction branch migration complex subunit RuvA (194 aa).

Positions 1–61 (MYDFLTGIIK…DNQISLYGFK (61 aa)) are domain I. Positions 62 to 139 (TVKERNLFQK…GDFSKNIAPM (78 aa)) are domain II. Positions 139–143 (MKNLL) are flexible linker. A domain III region spans residues 144 to 194 (ENSAELDDALAALVALGFSSKEVNKINPKLASLGELTTDAYIQKGLKLLTK).

Belongs to the RuvA family. As to quaternary structure, homotetramer. Forms an RuvA(8)-RuvB(12)-Holliday junction (HJ) complex. HJ DNA is sandwiched between 2 RuvA tetramers; dsDNA enters through RuvA and exits via RuvB. An RuvB hexamer assembles on each DNA strand where it exits the tetramer. Each RuvB hexamer is contacted by two RuvA subunits (via domain III) on 2 adjacent RuvB subunits; this complex drives branch migration. In the full resolvosome a probable DNA-RuvA(4)-RuvB(12)-RuvC(2) complex forms which resolves the HJ.

It localises to the cytoplasm. Its function is as follows. The RuvA-RuvB-RuvC complex processes Holliday junction (HJ) DNA during genetic recombination and DNA repair, while the RuvA-RuvB complex plays an important role in the rescue of blocked DNA replication forks via replication fork reversal (RFR). RuvA specifically binds to HJ cruciform DNA, conferring on it an open structure. The RuvB hexamer acts as an ATP-dependent pump, pulling dsDNA into and through the RuvAB complex. HJ branch migration allows RuvC to scan DNA until it finds its consensus sequence, where it cleaves and resolves the cruciform DNA. The polypeptide is Holliday junction branch migration complex subunit RuvA (Oenococcus oeni (strain ATCC BAA-331 / PSU-1)).